Here is a 187-residue protein sequence, read N- to C-terminus: Endoribonuclease YbeY (187 aa).

Positions 148, 152, and 158 each coordinate Zn(2+).

Belongs to the endoribonuclease YbeY family. The cofactor is Zn(2+).

The protein resides in the cytoplasm. Its function is as follows. Single strand-specific metallo-endoribonuclease involved in late-stage 70S ribosome quality control and in maturation of the 3' terminus of the 16S rRNA. This is Endoribonuclease YbeY from Ralstonia nicotianae (strain ATCC BAA-1114 / GMI1000) (Ralstonia solanacearum).